The following is a 381-amino-acid chain: Queuine tRNA-ribosyltransferase (381 aa).

D96 acts as the Proton acceptor in catalysis. Substrate is bound by residues 96–100 (DSGGF), D150, Q193, and G220. Positions 251–257 (GVGSPDS) are RNA binding. D270 functions as the Nucleophile in the catalytic mechanism. The tract at residues 275–279 (TRIAR) is RNA binding; important for wobble base 34 recognition. Zn(2+) is bound by residues C308, C310, C313, and H339.

The protein belongs to the queuine tRNA-ribosyltransferase family. Homodimer. Within each dimer, one monomer is responsible for RNA recognition and catalysis, while the other monomer binds to the replacement base PreQ1. Zn(2+) serves as cofactor.

It carries out the reaction 7-aminomethyl-7-carbaguanine + guanosine(34) in tRNA = 7-aminomethyl-7-carbaguanosine(34) in tRNA + guanine. The protein operates within tRNA modification; tRNA-queuosine biosynthesis. Catalyzes the base-exchange of a guanine (G) residue with the queuine precursor 7-aminomethyl-7-deazaguanine (PreQ1) at position 34 (anticodon wobble position) in tRNAs with GU(N) anticodons (tRNA-Asp, -Asn, -His and -Tyr). Catalysis occurs through a double-displacement mechanism. The nucleophile active site attacks the C1' of nucleotide 34 to detach the guanine base from the RNA, forming a covalent enzyme-RNA intermediate. The proton acceptor active site deprotonates the incoming PreQ1, allowing a nucleophilic attack on the C1' of the ribose to form the product. After dissociation, two additional enzymatic reactions on the tRNA convert PreQ1 to queuine (Q), resulting in the hypermodified nucleoside queuosine (7-(((4,5-cis-dihydroxy-2-cyclopenten-1-yl)amino)methyl)-7-deazaguanosine). This Bacillus pumilus (strain SAFR-032) protein is Queuine tRNA-ribosyltransferase.